Reading from the N-terminus, the 184-residue chain is Ribosome-recycling factor (184 aa).

The protein belongs to the RRF family.

It localises to the cytoplasm. In terms of biological role, responsible for the release of ribosomes from messenger RNA at the termination of protein biosynthesis. May increase the efficiency of translation by recycling ribosomes from one round of translation to another. The protein is Ribosome-recycling factor of Bifidobacterium adolescentis (strain ATCC 15703 / DSM 20083 / NCTC 11814 / E194a).